The chain runs to 303 residues: Recombination-associated protein RdgC (303 aa).

It belongs to the RdgC family.

The protein resides in the cytoplasm. Its subcellular location is the nucleoid. Its function is as follows. May be involved in recombination. This is Recombination-associated protein RdgC from Edwardsiella ictaluri (strain 93-146).